Here is a 548-residue protein sequence, read N- to C-terminus: Viridiflorene synthase (548 aa).

Mg(2+) contacts are provided by Asp301, Asp305, Asp444, Thr448, and Glu452. The DDXXD motif signature appears at 301–305 (DDTFD).

Belongs to the terpene synthase family. Tpsa subfamily. It depends on Mg(2+) as a cofactor. As to expression, expressed in stem and leaf trichomes. Detected in roots, fruits and flowers.

The protein localises to the cytoplasm. It catalyses the reaction (2E,6E)-farnesyl diphosphate = viridiflorene + diphosphate. It participates in secondary metabolite biosynthesis; terpenoid biosynthesis. Sesquiterpene synthase involved in the production of viridiflorene from (E,E)-farnesyl diphosphate. Can also use (Z,Z)-FPP to make several unidentified sesquiterpenes. This is Viridiflorene synthase from Solanum lycopersicum (Tomato).